Reading from the N-terminus, the 61-residue chain is Large ribosomal subunit protein bL28 (61 aa).

Belongs to the bacterial ribosomal protein bL28 family.

The sequence is that of Large ribosomal subunit protein bL28 from Lactobacillus gasseri (strain ATCC 33323 / DSM 20243 / BCRC 14619 / CIP 102991 / JCM 1131 / KCTC 3163 / NCIMB 11718 / NCTC 13722 / AM63).